Here is a 185-residue protein sequence, read N- to C-terminus: Ribosome-recycling factor (185 aa).

This sequence belongs to the RRF family.

The protein localises to the cytoplasm. In terms of biological role, responsible for the release of ribosomes from messenger RNA at the termination of protein biosynthesis. May increase the efficiency of translation by recycling ribosomes from one round of translation to another. The polypeptide is Ribosome-recycling factor (Citrifermentans bemidjiense (strain ATCC BAA-1014 / DSM 16622 / JCM 12645 / Bem) (Geobacter bemidjiensis)).